The sequence spans 329 residues: 4-hydroxythreonine-4-phosphate dehydrogenase (329 aa).

Residues H136 and T137 each coordinate substrate. Positions 166, 211, and 266 each coordinate a divalent metal cation. Substrate-binding residues include K274, N283, and R292.

Belongs to the PdxA family. In terms of assembly, homodimer. Zn(2+) is required as a cofactor. Requires Mg(2+) as cofactor. Co(2+) serves as cofactor.

It localises to the cytoplasm. It carries out the reaction 4-(phosphooxy)-L-threonine + NAD(+) = 3-amino-2-oxopropyl phosphate + CO2 + NADH. It participates in cofactor biosynthesis; pyridoxine 5'-phosphate biosynthesis; pyridoxine 5'-phosphate from D-erythrose 4-phosphate: step 4/5. Catalyzes the NAD(P)-dependent oxidation of 4-(phosphooxy)-L-threonine (HTP) into 2-amino-3-oxo-4-(phosphooxy)butyric acid which spontaneously decarboxylates to form 3-amino-2-oxopropyl phosphate (AHAP). The protein is 4-hydroxythreonine-4-phosphate dehydrogenase of Escherichia fergusonii (strain ATCC 35469 / DSM 13698 / CCUG 18766 / IAM 14443 / JCM 21226 / LMG 7866 / NBRC 102419 / NCTC 12128 / CDC 0568-73).